Consider the following 352-residue polypeptide: Protein AMBP (352 aa).

Residues 1-19 form the signal peptide; it reads MRSLSGLLLLLTACLAVNA. 2 residues coordinate 3-hydroxy-L-kynurenine: C53 and K111. A disulfide bridge links C91 with C188. N115 carries N-linked (GlcNAc...) asparagine glycosylation. Residues K137 and K149 each coordinate 3-hydroxy-L-kynurenine. S215 is a glycosylation site (O-linked (Xyl...) (chondroitin sulfate) serine). 2 N-linked (GlcNAc...) asparagine glycosylation sites follow: N223 and N250. Cystine bridges form between C231/C281, C240/C264, C256/C277, C287/C337, C296/C320, and C312/C333. BPTI/Kunitz inhibitor domains are found at residues 231 to 281 and 287 to 337; these read CQLD…LQTC and CNLP…KEYC.

The protein in the N-terminal section; belongs to the calycin superfamily. Lipocalin family. In terms of assembly, monomer. Homodimer. In plasma, it occurs as a monomer or dimer and in covalently-linked complexes with immunoglobulin A (IgA), ALB/albumin and F2/prothrombin. Chromophore-bound alpha-1-microglobulin interacts with the constant region of immunoglobulin A. Chromophore-bound alpha-1-microglobulin interacts with ALB with molar ratio 2:1 and 1:1; this interaction does not prevent fatty acid binding to ALB. Interacts with F2/prothrombin (via N-terminus) with molar ratio 2:1 and 1:1; this interaction does not prevent the activation of prothrombin to thrombin. Interacts with NDUFAB1, a subunit of mitochondrial complex I. Interacts with FN1. As to quaternary structure, I-alpha-I plasma protease inhibitors are assembled from one or two heavy chains (HC) and one light chain, bikunin. Inter-alpha-inhibitor (I-alpha-I) is composed of ITIH1/HC1, ITIH2/HC2 and bikunin, and pre-alpha-inhibitor (P-alpha-I) of ITIH3/HC3 and bikunin. Interacts with TNFAIP6 (via Link domain). Monomer. Also occurs as a complex with tryptase in mast cells. In terms of processing, the precursor is proteolytically processed into separately functioning proteins. 3-hydroxykynurenine, an oxidized tryptophan metabolite that is common in biological fluids, reacts with Cys-53, Lys-111, Lys-137, and Lys-149 to form heterogeneous polycyclic chromophores including hydroxanthommatin. The reaction by alpha-1-microglobulin is autocatalytic; the human protein forms chromophore even when expressed in insect and bacterial cells. The chromophore can react with accessible cysteines forming non-reducible thioether cross-links with other molecules of alpha-1-microglobulin or with other proteins such as Ig alpha-1 chain C region 'Cys-352'. Post-translationally, heavy chains are interlinked with bikunin via a chondroitin 4-sulfate bridge to the C-terminal aspartate. In terms of processing, proteolytically cleaved by PRSS3 at Kunitz domain 2. In terms of tissue distribution, expressed by the liver and secreted in plasma.

It localises to the secreted. It is found in the endoplasmic reticulum. The protein resides in the cytoplasm. Its subcellular location is the cytosol. The protein localises to the cell membrane. It localises to the nucleus membrane. It is found in the mitochondrion inner membrane. The protein resides in the extracellular space. Its subcellular location is the extracellular matrix. Functionally, antioxidant and tissue repair protein with reductase, heme-binding and radical-scavenging activities. Removes and protects against harmful oxidants and repairs macromolecules in intravascular and extravascular spaces and in intracellular compartments. Intravascularly, plays a regulatory role in red cell homeostasis by preventing heme- and reactive oxygen species-induced cell damage. Binds and degrades free heme to protect fetal and adult red blood cells from hemolysis. Reduces extracellular methemoglobin, a Fe3+ (ferric) form of hemoglobin that cannot bind oxygen, back to the Fe2+ (ferrous) form deoxyhemoglobin, which has oxygen-carrying potential. Upon acute inflammation, inhibits oxidation of low-density lipoprotein particles by MPO and limits vascular damage. Extravascularly, protects from oxidation products formed on extracellular matrix structures and cell membranes. Catalyzes the reduction of carbonyl groups on oxidized collagen fibers and preserves cellular and extracellular matrix ultrastructures. Importantly, counteracts the oxidative damage at blood-placenta interface, preventing leakage of free fetal hemoglobin into the maternal circulation. Intracellularly, has a role in maintaining mitochondrial redox homeostasis. Bound to complex I of the respiratory chain of mitochondria, may scavenge free radicals and preserve mitochondrial ATP synthesis. Protects renal tubule epithelial cells from heme-induced oxidative damage to mitochondria. Reduces cytochrome c from Fe3+ (ferric) to the Fe2+ (ferrous) state through formation of superoxide anion radicals in the presence of ascorbate or NADH/NADPH electron donor cofactors, ascorbate being the preferred cofactor. Has a chaperone role in facilitating the correct folding of bikunin in the endoplasmic reticulum compartment. In terms of biological role, kunitz-type serine protease inhibitor and structural component of extracellular matrix with a role in extracellular space remodeling and cell adhesion. Among others, has antiprotease activity toward kallikrein, a protease involved in airway inflammation; inhibits GZMK/granzyme, a granule-stored serine protease involved in NK and T cell cytotoxic responses; and inhibits PLG/plasmin, a protease required for activation of matrix metalloproteinases. As part of I-alpha-I complex, provides for the heavy chains to be transferred from I-alpha-I complex to hyaluronan in the presence of TNFAIP6, in a dynamic process that releases free bikunin and remodels extracellular matrix proteoglycan structures. Free bikunin, but not its heavy chain-bound form, acts as a potent protease inhibitor in airway secretions. Part of hyaluronan-rich extracellular matrix that surrounds oocyte during cumulus oophorus expansion, an indispensable process for proper ovulation. Also inhibits calcium oxalate crystallization. Kunitz-type serine protease inhibitor. Has high catalytic efficiency for F10/blood coagulation factor Xa and may act as an anticoagulant by inhibiting prothrombin activation. Inhibits trypsin and mast cell CMA1/chymase and tryptase proteases. In Bos taurus (Bovine), this protein is Protein AMBP (AMBP).